A 1807-amino-acid polypeptide reads, in one-letter code: Atrochrysone carboxylic acid synthase Agnpks1 (1807 aa).

An N-terminal acylcarrier protein transacylase domain (SAT) region spans residues 41-173 (LFRELHNHSK…ITGAQVIRQA (133 aa)). A Ketosynthase family 3 (KS3) domain is found at 411–845 (QSKIAIVGMS…GGNTTILLEE (435 aa)). Residues cysteine 584, histidine 720, and histidine 763 each act as for beta-ketoacyl synthase activity in the active site. Residues 946-1265 (FTFTGQGASY…SLAALHCAGV (320 aa)) form a malonyl-CoA:ACP transacylase (MAT) domain region. Positions 1334–1653 (TSTVHQIIQE…RILLSRFFSA (320 aa)) are product template (PT) domain. An N-terminal hotdog fold region spans residues 1338-1473 (HQIIQESIDG…ATLIYGDPSE (136 aa)). Residues 1338 to 1648 (HQIIQESIDG…FRRYPRILLS (311 aa)) enclose the PKS/mFAS DH domain. Histidine 1370 (proton acceptor; for dehydratase activity) is an active-site residue. The tract at residues 1500-1648 (VANRFNHQMA…FRRYPRILLS (149 aa)) is C-terminal hotdog fold. Aspartate 1559 acts as the Proton donor; for dehydratase activity in catalysis. The 75-residue stretch at 1732 to 1806 (DTTTAKAIQI…DLRSWLEEYY (75 aa)) folds into the Carrier domain. At serine 1766 the chain carries O-(pantetheine 4'-phosphoryl)serine.

The enzyme catalyses holo-[ACP] + 8 malonyl-CoA + 8 H(+) = atrochrysone carboxyl-[ACP] + 8 CO2 + 8 CoA + 2 H2O. It functions in the pathway secondary metabolite biosynthesis. Functionally, non-reducing polyketide synthase; part of the gene cluster that mediates the biosynthesis of agnestins, dihydroxy-xanthone metabolites. The pathway begins with the assembly and cyclization of atrochrysone thioester by the non-reducing polyketide synthase Agnpks1. The atrochrysone carboxyl ACP thioesterase AgnL7 then breaks the thioester bond and releases the atrochrysone carboxylic acid as the first enzyme-free intermediate. The decarboxylase AgnL1 then catalyzes the concerted decarboxylation-elimination required to convert atochrysone carboxylic acid into emodin anthrone, which is further oxidized to emodin by the anthrone oxygenase AgnL2. Emodin then undergoes reduction catalyzed by the oxidoreductase AgnL4 to yield the dihydroquinone tautomer which is the substrate for reduction by the short chain dehydrogenase AgnL6 reduction to produce hydroxyketone, followed by AgnL8 dehydration and likely spontaneous autoxidation to chrysophanol. Baeyer-Villiger oxidation by the oxidase AgnL3 leads to monodictyphenone via cleavage of the C-10/C-10a bond of chrysophanol. Alternative cleavage at the C-4a/C-10 bond of chrysophanol also leads to the formation some cephalone F. Further conversion to agnestins A and B, requires reduction to dihydro-monodictyphenone, oxidation to agnestin C probably via an epoxide, and rearrangement to either agnestin A or agnestin B directly, although agnestin A or agnestin B can also interconvert. Within the cluster, AgnR1 is the only unassigned oxidoreductase present which could be involved in this conversion. However, AgnR1 seems not to be involved in this step, and thus genes involved in the proposed oxidation/reduction may be located elsewhere on the genome. Further agnestin A derivatives are probably formed by spontaneous decarboxylations, dehydrations and methanolysis reactions. This is Atrochrysone carboxylic acid synthase Agnpks1 from Paecilomyces divaricatus (Penicillium divaricatum).